A 309-amino-acid polypeptide reads, in one-letter code: Homoserine O-succinyltransferase (309 aa).

The Acyl-thioester intermediate role is filled by Cys-142. Lys-163 and Ser-192 together coordinate substrate. His-235 acts as the Proton acceptor in catalysis. Glu-237 is a catalytic residue. A substrate-binding site is contributed by Arg-249.

Belongs to the MetA family.

The protein localises to the cytoplasm. The enzyme catalyses L-homoserine + succinyl-CoA = O-succinyl-L-homoserine + CoA. The protein operates within amino-acid biosynthesis; L-methionine biosynthesis via de novo pathway; O-succinyl-L-homoserine from L-homoserine: step 1/1. Transfers a succinyl group from succinyl-CoA to L-homoserine, forming succinyl-L-homoserine. This is Homoserine O-succinyltransferase from Serratia proteamaculans (strain 568).